The sequence spans 534 residues: UDP-glucuronosyltransferase 2A3 (534 aa).

The signal sequence occupies residues 1 to 18; it reads MVSEKCVAAFFLLQLCWA. The Extracellular segment spans residues 19–493; that stretch reads GCGFCSKVLV…SWFQYHSLDV (475 aa). N-linked (GlcNAc...) asparagine glycosylation is present at N102. N6-succinyllysine is present on K135. N-linked (GlcNAc...) asparagine glycosylation is present at N204. A helical membrane pass occupies residues 494–514; that stretch reads IGFLLLCVVTLTFIITKFCLF. Residues 515–534 are Cytoplasmic-facing; that stretch reads VCQKLYMKESKKMGNRKKKN.

The protein belongs to the UDP-glycosyltransferase family. In terms of tissue distribution, highly expressed in liver, with lower levels in duodenum and jejunum.

The protein localises to the membrane. It catalyses the reaction glucuronate acceptor + UDP-alpha-D-glucuronate = acceptor beta-D-glucuronoside + UDP + H(+). Its function is as follows. UDP-glucuronosyltransferases catalyze phase II biotransformation reactions in which lipophilic substrates are conjugated with glucuronic acid to increase water solubility and enhance excretion. They are of major importance in the conjugation and subsequent elimination of potentially toxic xenobiotics and endogenous compounds. The chain is UDP-glucuronosyltransferase 2A3 (Ugt2a3) from Mus musculus (Mouse).